The sequence spans 31 residues: Phallacidin proprotein 1 (31 aa).

Positions 1–10 (MSDINATRLP) are excised as a propeptide. Residues 11–17 (AWLVDCP) constitute a cross-link (cyclopeptide (Ala-Pro)). A cross-link (2'-cysteinyl-6'-hydroxytryptophan sulfoxide (Trp-Cys)) is located at residues 12-16 (WLVDC). A propeptide spanning residues 18–31 (CVGDDVNRLLTRGE) is cleaved from the precursor.

Belongs to the MSDIN fungal toxin family. Processed by the macrocyclase-peptidase enzyme POPB to yield a toxic cyclic heptapeptide. POPB first removes 10 residues from the N-terminus. Conformational trapping of the remaining peptide forces the enzyme to release this intermediate rather than proceed to macrocyclization. The enzyme rebinds the remaining peptide in a different conformation and catalyzes macrocyclization of the N-terminal 7 residues.

Major toxin that belongs to the bicyclic heptapeptides called phallotoxins. Although structurally related to amatoxins, phallotoxins have a different mode of action, which is the stabilization of F-actin. Phallotoxins are poisonous when administered parenterally, but not orally because of poor absorption. In Amanita bisporigera (Destroying angel), this protein is Phallacidin proprotein 1 (PHA1_2).